The sequence spans 562 residues: Phosphoglucomutase-1 (562 aa).

Met1 carries the post-translational modification N-acetylmethionine. Lys16 bears the N6-acetyllysine mark. Position 23 (Arg23) interacts with alpha-D-glucose 1,6-bisphosphate. Thr115 carries the phosphothreonine modification. Ser117 contacts alpha-D-glucose 1,6-bisphosphate. The Phosphoserine intermediate role is filled by Ser117. Position 117 (Ser117) interacts with Mg(2+). Phosphoserine occurs at positions 117 and 134. Thr185 carries the phosphothreonine modification. At Ser213 the chain carries Phosphoserine. Mg(2+)-binding residues include Asp288, Asp290, and Asp292. Alpha-D-glucose 1,6-bisphosphate contacts are provided by Asp292 and Arg293. Lys349 is subject to N6-acetyllysine. Tyr353 is subject to Phosphotyrosine. Position 357 (Thr357) interacts with alpha-D-glucose 1,6-bisphosphate. The residue at position 369 (Ser369) is a Phosphoserine. Residues Glu376, Ser378, and Lys389 each coordinate alpha-D-glucose 1,6-bisphosphate. Ser378 is modified (phosphoserine). Lys419 carries the post-translational modification N6-succinyllysine. Thr467 bears the Phosphothreonine; by PAK1 mark. Residues Ser485 and Ser505 each carry the phosphoserine modification. Residue Thr507 is modified to Phosphothreonine. Ser509 and Ser541 each carry phosphoserine.

The protein belongs to the phosphohexose mutase family. As to quaternary structure, monomer. Requires Mg(2+) as cofactor. In terms of processing, isoform 2 is the major calmodulin-dependent phosphoprotein in junctional skeletal sarcoplasmic reticulum vesicles. Post-translationally, phosphorylation at Thr-467 by PAK1 significantly enhances enzymatic activity.

The protein localises to the cytoplasm. It localises to the sarcoplasmic reticulum. The enzyme catalyses alpha-D-glucose 1-phosphate = alpha-D-glucose 6-phosphate. The catalysed reaction is O-phospho-L-seryl-[protein] + alpha-D-glucose 1-phosphate = alpha-D-glucose 1,6-bisphosphate + L-seryl-[protein]. It carries out the reaction alpha-D-glucose 1,6-bisphosphate + L-seryl-[protein] = O-phospho-L-seryl-[protein] + alpha-D-glucose 6-phosphate. Glucose-1,6-bisphosphate enhances phosphorylation of the active site Ser-117, and thereby increases enzyme activity. In terms of biological role, catalyzes the reversible isomerization of alpha-D-glucose 1-phosphate to alpha-D-glucose 6-phosphate. The mechanism proceeds via the intermediate compound alpha-D-glucose 1,6-bisphosphate. This enzyme participates in both the breakdown and synthesis of glucose. In Oryctolagus cuniculus (Rabbit), this protein is Phosphoglucomutase-1 (PGM1).